A 526-amino-acid chain; its full sequence is METIFNRNKEEHPEPIKAEVQGQLPTWLQGVLLRNGPGMHTIGDTKYNHWFDGLALLHSFTFKNGEVYYRSKYLRSDTYNCNIEANRIVVSEFGTMAYPDPCKNIFAKAFSYLSHTIPEFTDNCLINIMKTGDDYYATSETNFIRKIDPQTLETLDKVDYSKYVAVNLATSHPHYDSAGNILNMGTSIVDKGRTKYVLFKIPSSVPEKEKKKSCFKHLEVVCSIPSRSLLQPSYYHSFGITENYIVFIEQPFKLDIVKLATAYIRGVNWASCLSFHKEDKTWFHFVDRKTKKEVSTKFYTDALVLYHHINAYEEDGHVVFDIVAYRDNSLYDMFYLKKLDKDFEVNNKLTSIPTCKRFVVPLQYDKDAEVGSNLVKLPTSATAVKEKDGSIYCQPEILCEGIELPRVNYDYNGKKYKYVYATEVQWSPVPTKIAKLNVQTKEVLHWGEDHCWPSEPIFVPSPDAREEDEGVVLTCVVVSEPNKAPFLLILDAKTFKELGRATVNVEMHLDLHGMFIPQNDLGAETE.

4 residues coordinate Fe cation: histidine 172, histidine 236, histidine 307, and histidine 512.

It belongs to the carotenoid oxygenase family. It depends on Fe(2+) as a cofactor.

The protein resides in the cytoplasm. It localises to the cytosol. It carries out the reaction all-trans-beta-carotene + O2 = 2 all-trans-retinal. Its pathway is cofactor metabolism; retinol metabolism. In terms of biological role, symmetrically cleaves beta-carotene into two molecules of retinal using a dioxygenase mechanism. This is Beta,beta-carotene 15,15'-dioxygenase from Gallus gallus (Chicken).